Here is a 149-residue protein sequence, read N- to C-terminus: 5-hydroxytryptamine receptor 1E (149 aa).

Residues 1–6 (HQPANY) lie on the Extracellular side of the membrane. Residues 7-31 (LICSLAVTDLLVAVLVMPLSIMYIV) traverse the membrane as a helical segment. Over 32–39 (MDSWRLGY) the chain is Cytoplasmic. A helical transmembrane segment spans residues 40–65 (FICEVWLSVDMTCCTCSILHLCVIAL). A disulfide bridge connects residues cysteine 42 and cysteine 120. Residues aspartate 49 and cysteine 53 each coordinate serotonin. The DRY motif; important for ligand-induced conformation changes motif lies at 66–68 (DRY). Over 66–85 (DRYWAITNAIEYARKRTAKR) the chain is Extracellular. A helical membrane pass occupies residues 86–104 (AGLMILTVWTISIFISMPP). Residues 105–149 (LFWRSHRQLSPPPSQCAIQHDHVIYTIYSTLGAFYIPLTLILILY) are Cytoplasmic-facing.

This sequence belongs to the G-protein coupled receptor 1 family.

It localises to the cell membrane. Functionally, G-protein coupled receptor for 5-hydroxytryptamine (serotonin). Also functions as a receptor for various alkaloids and psychoactive substances. Ligand binding causes a conformation change that triggers signaling via guanine nucleotide-binding proteins (G proteins) and modulates the activity of downstream effectors, such as adenylate cyclase. HTR1E is coupled to G(i)/G(o) G alpha proteins and mediates inhibitory neurotransmission by inhibiting adenylate cyclase activity. The chain is 5-hydroxytryptamine receptor 1E (HTR1E) from Sus scrofa (Pig).